The primary structure comprises 250 residues: ATP synthase subunit a (250 aa).

Helical transmembrane passes span 26-46, 84-104, 114-134, 143-163, 193-213, and 216-236; these read FTNASLFMVATVGAAAGFLYL, FFPMVFSLFMFILTANLLGMV, IIVTFALAVFVIGTVLLYGFY, LFVPQGVPGALLPLVVAIEII, FVASLSAFGALGIGGAILPLI, and VALTGLEFLVAFLQAYVFAVL.

Belongs to the ATPase A chain family. In terms of assembly, F-type ATPases have 2 components, CF(1) - the catalytic core - and CF(0) - the membrane proton channel. CF(1) has five subunits: alpha(3), beta(3), gamma(1), delta(1), epsilon(1). CF(0) has three main subunits: a(1), b(2) and c(9-12). The alpha and beta chains form an alternating ring which encloses part of the gamma chain. CF(1) is attached to CF(0) by a central stalk formed by the gamma and epsilon chains, while a peripheral stalk is formed by the delta and b chains.

It localises to the cell inner membrane. Key component of the proton channel; it plays a direct role in the translocation of protons across the membrane. The polypeptide is ATP synthase subunit a (Rhizobium meliloti (strain 1021) (Ensifer meliloti)).